Here is a 318-residue protein sequence, read N- to C-terminus: Myoblast determination protein 1 (318 aa).

Met-1 participates in a covalent cross-link: Peptide (Met-Gly) (interchain with G-Cter in ubiquitin). Lys-104 bears the N6-methyllysine; by EHMT2 mark. The bHLH domain maps to 109-160 (DRRKAATMRERRRLSKVNEAFETLKRCTSSNPNQRLPKVEILRNAIRYIEGL). Disordered stretches follow at residues 175 to 225 (AAFY…QNGY) and 265 to 318 (APAL…YQVL). A compositionally biased stretch (polar residues) spans 196–206 (SDASSPRSNCS). Residues 265–274 (APALLLADAP) are compositionally biased toward low complexity. 2 stretches are compositionally biased toward polar residues: residues 287–298 (LSDTEQGTQTPS) and 307–318 (AGSNPNAIYQVL).

As to quaternary structure, interacts with SUV39H1. Efficient DNA binding requires dimerization with another bHLH protein. Seems to form active heterodimers with ITF-2. Interacts with DDX5. Interacts with CHD2. Interacts with TSC22D3 isoform 1 and isoform 4. Interacts with SETD3. Interacts with P-TEFB complex; promotes the transcriptional activity of MYOD1 through its CDK9-mediated phosphorylation. Interacts with CSRP3. Interacts with NUPR1. Post-translationally, acetylated by a complex containing EP300 and PCAF. The acetylation is essential to activate target genes. Conversely, its deacetylation by SIRT1 inhibits its function. Ubiquitinated on the N-terminus; which is required for proteasomal degradation. In terms of processing, phosphorylated by CDK9. This phosphorylation promotes its function in muscle differentiation. Post-translationally, methylation at Lys-104 by EHMT2/G9a inhibits myogenic activity.

It localises to the nucleus. Acts as a transcriptional activator that promotes transcription of muscle-specific target genes and plays a role in muscle differentiation. Together with MYF5 and MYOG, co-occupies muscle-specific gene promoter core region during myogenesis. Induces fibroblasts to differentiate into myoblasts. Interacts with and is inhibited by the twist protein. This interaction probably involves the basic domains of both proteins. The polypeptide is Myoblast determination protein 1 (Myod1) (Mus musculus (Mouse)).